Consider the following 169-residue polypeptide: Crossover junction endodeoxyribonuclease RuvC (169 aa).

Catalysis depends on residues Asp7, Glu67, and Asp139. Mg(2+) is bound by residues Asp7, Glu67, and Asp139.

Belongs to the RuvC family. Homodimer which binds Holliday junction (HJ) DNA. The HJ becomes 2-fold symmetrical on binding to RuvC with unstacked arms; it has a different conformation from HJ DNA in complex with RuvA. In the full resolvosome a probable DNA-RuvA(4)-RuvB(12)-RuvC(2) complex forms which resolves the HJ. The cofactor is Mg(2+).

The protein localises to the cytoplasm. It catalyses the reaction Endonucleolytic cleavage at a junction such as a reciprocal single-stranded crossover between two homologous DNA duplexes (Holliday junction).. Functionally, the RuvA-RuvB-RuvC complex processes Holliday junction (HJ) DNA during genetic recombination and DNA repair. Endonuclease that resolves HJ intermediates. Cleaves cruciform DNA by making single-stranded nicks across the HJ at symmetrical positions within the homologous arms, yielding a 5'-phosphate and a 3'-hydroxyl group; requires a central core of homology in the junction. The consensus cleavage sequence is 5'-(A/T)TT(C/G)-3'. Cleavage occurs on the 3'-side of the TT dinucleotide at the point of strand exchange. HJ branch migration catalyzed by RuvA-RuvB allows RuvC to scan DNA until it finds its consensus sequence, where it cleaves and resolves the cruciform DNA. This is Crossover junction endodeoxyribonuclease RuvC from Rhodospirillum rubrum (strain ATCC 11170 / ATH 1.1.1 / DSM 467 / LMG 4362 / NCIMB 8255 / S1).